The chain runs to 270 residues: Replication protein A 32 kDa subunit (270 aa).

M1 bears the N-acetylmethionine mark. Residues S4 and S8 each carry the phosphoserine; by PRKDC modification. A Phosphothreonine; by PRKDC modification is found at T21. The segment at T21–R40 is disordered. S23 is subject to Phosphoserine; by CDK2. S29 is subject to Phosphoserine; by CDK1. At S33 the chain carries Phosphoserine; by PRKDC. Glycyl lysine isopeptide (Lys-Gly) (interchain with G-Cter in ubiquitin) cross-links involve residues K37 and K38. Positions V74 to P148 form a DNA-binding region, OB. Positions G187–E270 are interaction with RAD52, TIPIN, UNG and XPA.

It belongs to the replication factor A protein 2 family. In terms of assembly, component of the replication protein A complex (RPA/RP-A), a heterotrimeric complex composed of RPA1, RPA2 and RPA3. Interacts with PRPF19; the PRP19-CDC5L complex is recruited to the sites of DNA repair where it ubiquitinates the replication protein A complex (RPA). Interacts with SERTAD3. Interacts with TIPIN. Interacts with TIMELESS. Interacts with PPP4R2; the interaction is direct, DNA damage-dependent and mediates the recruitment of the PP4 catalytic subunit PPP4C. Interacts (hyperphosphorylated) with RAD51. Interacts with SMARCAL1; the interaction is direct and mediates the recruitment to the RPA complex of SMARCAL1. Interacts with RAD52 and XPA; those interactions are direct and associate RAD52 and XPA to the RPA complex. Interacts with FBH1. Interacts with ETAA1; the interaction is direct and promotes ETAA1 recruitment at stalled replication forks. Interacts with DDI2. Interacts (in unphosphorylated form via N-terminus) with EIF4EBP3; the interaction enhances EIF4EBP3-mediated inhibition of EIF4E-mediated mRNA nuclear export. Post-translationally, differentially phosphorylated throughout the cell cycle, becoming phosphorylated at the G1-S transition and dephosphorylated in late mitosis. Mainly phosphorylated at Ser-23 and Ser-29, by cyclin A-CDK2 and cyclin B-CDK1, respectively during DNA replication and mitosis. Dephosphorylation may require the serine/threonine-protein phosphatase 4. Phosphorylation at Ser-23 and Ser-29 is a prerequisite for further phosphorylation. Becomes hyperphosphorylated on additional residues including Ser-4, Ser-8, Thr-21 and Ser-33 in response to DNA damage. Hyperphosphorylation is mediated by ATM, ATR and PRKDC. Primarily recruited to DNA repair nuclear foci as a hypophosphorylated form it undergoes subsequent hyperphosphorylation, catalyzed by ATR. Hyperphosphorylation is required for RAD51 recruitment to chromatin and efficient DNA repair. Phosphorylation at Thr-21 depends upon RFWD3 presence. DNA damage-induced 'Lys-63'-linked polyubiquitination by PRPF19 mediates ATRIP recruitment to the RPA complex at sites of DNA damage and activation of ATR. Ubiquitinated by RFWD3 at stalled replication forks in response to DNA damage: ubiquitination by RFWD3 does not lead to degradation by the proteasome and promotes removal of the RPA complex from stalled replication forks, promoting homologous recombination.

The protein localises to the nucleus. Its subcellular location is the PML body. In terms of biological role, as part of the heterotrimeric replication protein A complex (RPA/RP-A), binds and stabilizes single-stranded DNA intermediates, that form during DNA replication or upon DNA stress. It prevents their reannealing and in parallel, recruits and activates different proteins and complexes involved in DNA metabolism. Thereby, it plays an essential role both in DNA replication and the cellular response to DNA damage. In the cellular response to DNA damage, the RPA complex controls DNA repair and DNA damage checkpoint activation. Through recruitment of ATRIP activates the ATR kinase a master regulator of the DNA damage response. It is required for the recruitment of the DNA double-strand break repair factors RAD51 and RAD52 to chromatin in response to DNA damage. Also recruits to sites of DNA damage proteins like XPA and XPG that are involved in nucleotide excision repair and is required for this mechanism of DNA repair. Also plays a role in base excision repair (BER) probably through interaction with UNG. Also recruits SMARCAL1/HARP, which is involved in replication fork restart, to sites of DNA damage. May also play a role in telomere maintenance. This chain is Replication protein A 32 kDa subunit (RPA2), found in Pongo abelii (Sumatran orangutan).